The following is a 219-amino-acid chain: uncharacterized protein (219 aa).

This is an uncharacterized protein from Rickettsia prowazekii (strain Madrid E).